The chain runs to 170 residues: Tubulin polymerization-promoting protein family member 2 (170 aa).

Positions 127–170 (TGTHKERFDESGKGKGIAGREEMTDNTGYVSGYKGSGTYDKKTK) are disordered. The segment covering 129-149 (THKERFDESGKGKGIAGREEM) has biased composition (basic and acidic residues).

It belongs to the TPPP family. Expressed in spermatids. Detected in liver cancer (at protein level).

The protein localises to the cytoplasm. Its subcellular location is the cytosol. The protein resides in the cell projection. It is found in the cilium. It localises to the flagellum. Its function is as follows. Probable regulator of microtubule dynamics required for sperm motility. In contrast to other members of the family, has no microtubule bundling activity. The chain is Tubulin polymerization-promoting protein family member 2 from Homo sapiens (Human).